The chain runs to 249 residues: Triosephosphate isomerase (249 aa).

Positions 12 and 14 each coordinate substrate. The residue at position 14 (K14) is an N6-acetyllysine. Y68 bears the 3'-nitrotyrosine mark. A Phosphoserine modification is found at S80. H96 (electrophile) is an active-site residue. The residue at position 106 (S106) is a Phosphoserine. K142 is covalently cross-linked (Glycyl lysine isopeptide (Lys-Gly) (interchain with G-Cter in SUMO1)). K149 carries the post-translational modification N6-succinyllysine. K156 is modified (N6-acetyllysine; alternate). Residue K156 is modified to N6-succinyllysine; alternate. Residue S159 is modified to Phosphoserine. Residue E166 is the Proton acceptor of the active site. A Phosphothreonine modification is found at T173. K194 is subject to N6-acetyllysine; alternate. K194 bears the N6-succinyllysine; alternate mark. K194 bears the N6-methyllysine; alternate mark. Position 198 is a phosphoserine (S198). Y209 bears the 3'-nitrotyrosine mark. Position 212 is a phosphoserine (S212). A Phosphothreonine modification is found at T214. Phosphoserine is present on S223. N6-acetyllysine is present on K238.

It belongs to the triosephosphate isomerase family. Homodimer.

Its subcellular location is the cytoplasm. The catalysed reaction is dihydroxyacetone phosphate = methylglyoxal + phosphate. It catalyses the reaction D-glyceraldehyde 3-phosphate = dihydroxyacetone phosphate. The protein operates within carbohydrate degradation; glycolysis; D-glyceraldehyde 3-phosphate from glycerone phosphate: step 1/1. It functions in the pathway carbohydrate biosynthesis; gluconeogenesis. Its function is as follows. Triosephosphate isomerase is an extremely efficient metabolic enzyme that catalyzes the interconversion between dihydroxyacetone phosphate (DHAP) and D-glyceraldehyde-3-phosphate (G3P) in glycolysis and gluconeogenesis. Functionally, it is also responsible for the non-negligible production of methylglyoxal a reactive cytotoxic side-product that modifies and can alter proteins, DNA and lipids. The chain is Triosephosphate isomerase (TPI1) from Canis lupus familiaris (Dog).